A 62-amino-acid chain; its full sequence is Bacteriocin lactacin-F subunit LafX (62 aa).

A propeptide spanning residues 1–14 (MKLNDKELSKIVGG) is cleaved from the precursor.

The protein belongs to the bacteriocin class IIB family. In terms of assembly, this bacteriocin depends upon the complementation of two peptides for activity: LafA and LafX. Associated with a 180 kDa bacteriocin complex.

Functionally, heat stable bacteriocin active against Enterococcus faecalis and other Lactobacilli. The polypeptide is Bacteriocin lactacin-F subunit LafX (lafX) (Lactobacillus johnsonii (strain CNCM I-12250 / La1 / NCC 533)).